The chain runs to 125 residues: Large ribosomal subunit protein bL20 (125 aa).

Belongs to the bacterial ribosomal protein bL20 family.

Its function is as follows. Binds directly to 23S ribosomal RNA and is necessary for the in vitro assembly process of the 50S ribosomal subunit. It is not involved in the protein synthesizing functions of that subunit. The protein is Large ribosomal subunit protein bL20 of Rhizorhabdus wittichii (strain DSM 6014 / CCUG 31198 / JCM 15750 / NBRC 105917 / EY 4224 / RW1) (Sphingomonas wittichii).